The primary structure comprises 161 residues: Nucleotide-binding protein Tcr_1902 (161 aa).

It belongs to the YajQ family.

Functionally, nucleotide-binding protein. This is Nucleotide-binding protein Tcr_1902 from Hydrogenovibrio crunogenus (strain DSM 25203 / XCL-2) (Thiomicrospira crunogena).